The chain runs to 203 residues: Glycerol-3-phosphate acyltransferase (203 aa).

The next 5 membrane-spanning stretches (helical) occupy residues 4–24, 56–76, 80–100, 112–132, and 138–158; these read IAPGMIFLAYLCGSISSAILV, VAVLVFDVLKGMLPVWGAYML, PFWLGLIAIAACVGHIWPVFF, FGAIAPIGWDLTGVMAGTWLL, and GYSSLGAIVSALIAPFYVWWF.

It belongs to the PlsY family. As to quaternary structure, probably interacts with PlsX.

It is found in the cell inner membrane. It carries out the reaction an acyl phosphate + sn-glycerol 3-phosphate = a 1-acyl-sn-glycero-3-phosphate + phosphate. Its pathway is lipid metabolism; phospholipid metabolism. In terms of biological role, catalyzes the transfer of an acyl group from acyl-phosphate (acyl-PO(4)) to glycerol-3-phosphate (G3P) to form lysophosphatidic acid (LPA). This enzyme utilizes acyl-phosphate as fatty acyl donor, but not acyl-CoA or acyl-ACP. The polypeptide is Glycerol-3-phosphate acyltransferase (Enterobacter sp. (strain 638)).